The chain runs to 333 residues: Protein-methionine-sulfoxide reductase catalytic subunit MsrP (333 aa).

The segment at residues 1-43 (MHKHRKPTEADVTPESLFYQRRRVLKALGISAAALSLPLSAQA) is a signal peptide (tat-type signal). Residues Asn-87, 90–91 (YE), Cys-145, Thr-180, Asn-232, Arg-237, and 248–250 (NIK) contribute to the Mo-molybdopterin site.

The protein belongs to the MsrP family. As to quaternary structure, heterodimer of a catalytic subunit (MsrP) and a heme-binding subunit (MsrQ). Mo-molybdopterin serves as cofactor. In terms of processing, predicted to be exported by the Tat system. The position of the signal peptide cleavage has not been experimentally proven.

It localises to the periplasm. The catalysed reaction is L-methionyl-[protein] + a quinone + H2O = L-methionyl-(S)-S-oxide-[protein] + a quinol. It catalyses the reaction L-methionyl-[protein] + a quinone + H2O = L-methionyl-(R)-S-oxide-[protein] + a quinol. Its function is as follows. Part of the MsrPQ system that repairs oxidized periplasmic proteins containing methionine sulfoxide residues (Met-O), using respiratory chain electrons. Thus protects these proteins from oxidative-stress damage caused by reactive species of oxygen and chlorine generated by the host defense mechanisms. MsrPQ is essential for the maintenance of envelope integrity under bleach stress, rescuing a wide series of structurally unrelated periplasmic proteins from methionine oxidation. The catalytic subunit MsrP is non-stereospecific, being able to reduce both (R-) and (S-) diastereoisomers of methionine sulfoxide. This is Protein-methionine-sulfoxide reductase catalytic subunit MsrP from Pectobacterium atrosepticum (strain SCRI 1043 / ATCC BAA-672) (Erwinia carotovora subsp. atroseptica).